The primary structure comprises 236 residues: Ubiquinone biosynthesis O-methyltransferase (236 aa).

The S-adenosyl-L-methionine site is built by arginine 39, glycine 59, aspartate 80, and methionine 124.

This sequence belongs to the methyltransferase superfamily. UbiG/COQ3 family.

It catalyses the reaction a 3-demethylubiquinol + S-adenosyl-L-methionine = a ubiquinol + S-adenosyl-L-homocysteine + H(+). The enzyme catalyses a 3-(all-trans-polyprenyl)benzene-1,2-diol + S-adenosyl-L-methionine = a 2-methoxy-6-(all-trans-polyprenyl)phenol + S-adenosyl-L-homocysteine + H(+). The protein operates within cofactor biosynthesis; ubiquinone biosynthesis. In terms of biological role, O-methyltransferase that catalyzes the 2 O-methylation steps in the ubiquinone biosynthetic pathway. The sequence is that of Ubiquinone biosynthesis O-methyltransferase from Shewanella sp. (strain MR-7).